The primary structure comprises 321 residues: Glucokinase (321 aa).

8 to 13 (GDVGGT) lines the ATP pocket.

The protein belongs to the bacterial glucokinase family.

Its subcellular location is the cytoplasm. The enzyme catalyses D-glucose + ATP = D-glucose 6-phosphate + ADP + H(+). This chain is Glucokinase, found in Escherichia coli (strain SMS-3-5 / SECEC).